Consider the following 46-residue polypeptide: MQVLNSLRNAKQRHPDCQIVKRKGRLYVICKTNPRFKAVQGRKKRR.

The protein belongs to the bacterial ribosomal protein bL36 family.

The sequence is that of Large ribosomal subunit protein bL36 from Salmonella agona (strain SL483).